The sequence spans 444 residues: MFSKLKKTWYADDFSYFIRNFGVFTLIFSTMTLIILQVMHSSLYTSVDDKLHGLSENPQAVIQLAINRATEEIKDLENARADASKVEIKPNVSSNTEVILFDKDFTQLLSGNRFLGLDKIKLEKKELGHIYQIQVFNSYGQEEIYRVILMETNISSVSTNIKYAAVLINTSQLEQASQKHEQLIVVVMASFWILSLLASLYLARVSVRPLLESMQKQQSFVENASHELRTPLAVLQNRLETLFRKPEATIMDVSESIASSLEEVRNMRFLTTSLLNLARRDDGIKPELAEVPTSFFNTTFTNYEMIASENNRVFRFENRIHRTIVTDQLLLKQLMTILFDNAVKYTEEDGEIDFLISATDRNLYLLVSDNGIGISTEDKKKIFDRFYRVDKARTRQKGGFGLGLSLAKQIVDALKGTVTVKDNKPKGTIFEVKIAIQTPSKKKK.

The next 2 helical transmembrane spans lie at F21 to S41 and L183 to A203. The 216-residue stretch at N223 to T438 folds into the Histidine kinase domain. Position 226 is a phosphohistidine; by autocatalysis (H226).

It localises to the cell membrane. It carries out the reaction ATP + protein L-histidine = ADP + protein N-phospho-L-histidine.. Functionally, member of the two-component regulatory system CiaH/CiaR. Involved in early steps of competence regulation and in penicillin susceptibility. Probably phosphorylates CiaR. The sequence is that of Sensor protein CiaH (ciaH) from Streptococcus pneumoniae serotype 4 (strain ATCC BAA-334 / TIGR4).